The sequence spans 332 residues: Mediator of RNA polymerase II transcription subunit 3 (332 aa).

Disordered regions lie at residues 125 to 206 (EPVR…PGAT) and 221 to 242 (SPLN…TTPS). The segment covering 132-143 (SPSYRRPSNRSS) has biased composition (low complexity). Residues 144-153 (ADTPSSNAPT) show a composition bias toward polar residues. Low complexity-rich tracts occupy residues 155–166 (SAAVVSGAALVA) and 184–200 (PSVS…SGPA).

This sequence belongs to the Mediator complex subunit 3 family. Component of the Mediator complex.

The protein localises to the nucleus. Its function is as follows. Component of the Mediator complex, a coactivator involved in regulated gene transcription of nearly all RNA polymerase II-dependent genes. Mediator functions as a bridge to convey information from gene-specific regulatory proteins to the basal RNA polymerase II transcription machinery. Mediator is recruited to promoters by direct interactions with regulatory proteins and serves as a scaffold for the assembly of a functional preinitiation complex with RNA polymerase II and the general transcription factors. The protein is Mediator of RNA polymerase II transcription subunit 3 (PGD1) of Eremothecium gossypii (strain ATCC 10895 / CBS 109.51 / FGSC 9923 / NRRL Y-1056) (Yeast).